We begin with the raw amino-acid sequence, 475 residues long: Ras-GEF domain-containing family member 1A (475 aa).

The N-terminal Ras-GEF domain occupies Gln33–Leu164. One can recognise a Ras-GEF domain in the interval Asp208–Pro455.

Its function is as follows. Guanine nucleotide exchange factor (GEF) with specificity for rap2a and other Ras family proteins (in vitro). Plays a role in cell migration. This is Ras-GEF domain-containing family member 1A (rasgef1a) from Xenopus tropicalis (Western clawed frog).